The primary structure comprises 348 residues: Rhodopsin (348 aa).

Position 1 is an N-acetylmethionine (Met-1). The Extracellular segment spans residues 1–36 (MNGTEGPNFYVPFSNKTGVVRSPFEYPQYYLAEPWQ). 2 N-linked (GlcNAc...) asparagine glycosylation sites follow: Asn-2 and Asn-15. A helical membrane pass occupies residues 37–61 (FSMLAAYMFLLIVLGFPINFLTLYV). Residues 62–73 (TVQHKNVRTPLN) lie on the Cytoplasmic side of the membrane. A helical transmembrane segment spans residues 74–96 (YILLNLAVANHFMVFGGFTTTLY). At 97-110 (TSLHGYFVFGSTGC) the chain is on the extracellular side. A disulfide bridge connects residues Cys-110 and Cys-187. A helical membrane pass occupies residues 111–133 (NLEGFFATLGGEIALWSLVVLAI). The 'Ionic lock' involved in activated form stabilization motif lies at 134-136 (ERY). Residues 134-152 (ERYVVVCKPMSNFRFGENH) are Cytoplasmic-facing. A helical transmembrane segment spans residues 153 to 173 (AIMGVAFTWVMALACAAPPLV). The Extracellular portion of the chain corresponds to 174–202 (GWSRYIPEGMQCSCGIDYYTLKPEVNNES). Position 201 (Glu-201) interacts with Zn(2+). A helical membrane pass occupies residues 203–224 (FVIYMFVVHFTIPMTIIFFCYG). At 225 to 252 (QLVFTVKEAAAQQQESATTQKAEKEVTR) the chain is on the cytoplasmic side. A helical membrane pass occupies residues 253–274 (MVIIMVIAFLICWVPYASVAFY). Residues 275-286 (IFTHQGSDFGPI) are Extracellular-facing. Residue Gln-279 coordinates Zn(2+). The chain crosses the membrane as a helical span at residues 287 to 308 (LMTLPAFFAKSSAIYNPVIYIM). Lys-296 carries the post-translational modification N6-(retinylidene)lysine. At 309–348 (MNKQFRNCMLTTICCGKNPFGEEEGSTTASKTETSQVAPA) the chain is on the cytoplasmic side. Residues Cys-322 and Cys-323 are each lipidated (S-palmitoyl cysteine). The segment at 330–348 (EEEGSTTASKTETSQVAPA) is interaction with SAG. Ser-334 carries the phosphoserine modification. 2 positions are modified to phosphothreonine: Thr-335 and Thr-336. Position 338 is a phosphoserine (Ser-338). A phosphothreonine mark is found at Thr-340 and Thr-342. At Ser-343 the chain carries Phosphoserine.

It belongs to the G-protein coupled receptor 1 family. Opsin subfamily. In terms of assembly, homodimer. May form a complex composed of RHO, GRK1 and RCVRN in a Ca(2+)-dependent manner; RCVRN prevents the interaction between GRK1 and RHO. Interacts with GRK1. Interacts (phosphorylated form) with SAG. Interacts with GNAT1. Interacts with GNAT3. SAG and G-proteins compete for a common binding site. Interacts with PRCD; the interaction promotes PRCD stability. Forms a complex with ASAP1 and ARF4. Forms a complex with ASAP1, RAB11A, Rabin8/RAB3IP, ARF4 and RAB11FIP3; the complex regulates Golgi-to-cilia rhodopsin/RHO transport in photoreceptors. In terms of processing, phosphorylated on some or all of the serine and threonine residues present in the C-terminal region. Post-translationally, contains one covalently linked retinal chromophore. Upon light absorption, the covalently bound 11-cis-retinal is converted to all-trans-retinal. After hydrolysis of the Schiff base and release of the covalently bound all-trans-retinal, active rhodopsin is regenerated by binding of a fresh molecule of 11-cis-retinal.

It localises to the membrane. Its subcellular location is the cell projection. The protein localises to the cilium. It is found in the photoreceptor outer segment. Functionally, photoreceptor required for image-forming vision at low light intensity. Required for photoreceptor cell viability after birth. Light-induced isomerization of 11-cis to all-trans retinal triggers a conformational change that activates signaling via G-proteins. Subsequent receptor phosphorylation mediates displacement of the bound G-protein alpha subunit by the arrestin SAG and terminates signaling. The protein is Rhodopsin (RHO) of Loxodonta africana (African elephant).